Consider the following 124-residue polypeptide: Large ribosomal subunit protein bL36m (124 aa).

This sequence belongs to the bacterial ribosomal protein bL36 family. Component of the mitochondrial large ribosomal subunit (mt-LSU). Mature N.crassa 74S mitochondrial ribosomes consist of a small (37S) and a large (54S) subunit. The 37S small subunit contains a 16S ribosomal RNA (16S mt-rRNA) and 32 different proteins. The 54S large subunit contains a 23S rRNA (23S mt-rRNA) and 42 different proteins. bL36m has a zinc binding site.

The protein resides in the mitochondrion. Functionally, component of the mitochondrial ribosome (mitoribosome), a dedicated translation machinery responsible for the synthesis of mitochondrial genome-encoded proteins, including at least some of the essential transmembrane subunits of the mitochondrial respiratory chain. The mitoribosomes are attached to the mitochondrial inner membrane and translation products are cotranslationally integrated into the membrane. This is Large ribosomal subunit protein bL36m (rtc6) from Neurospora crassa (strain ATCC 24698 / 74-OR23-1A / CBS 708.71 / DSM 1257 / FGSC 987).